Consider the following 662-residue polypeptide: UvrABC system protein B (662 aa).

The Helicase ATP-binding domain maps to 31-188; the sequence is DNIEGGEKAQ…NDLVDIQFER (158 aa). 44–51 contributes to the ATP binding site; sequence GATGTGKT. The short motif at 97–120 is the Beta-hairpin element; it reads YYDYYQPEAYVPSSDTYIEKDSSV. The Helicase C-terminal domain occupies 435–601; that stretch reads QIDDLLGEIN…TIKKEIRDLI (167 aa). A UVR domain is found at 626–661; sequence KELVKKLEKQMQEAVEVLDFELAAQIRDMMLEVKAL.

Belongs to the UvrB family. Forms a heterotetramer with UvrA during the search for lesions. Interacts with UvrC in an incision complex.

The protein localises to the cytoplasm. The UvrABC repair system catalyzes the recognition and processing of DNA lesions. A damage recognition complex composed of 2 UvrA and 2 UvrB subunits scans DNA for abnormalities. Upon binding of the UvrA(2)B(2) complex to a putative damaged site, the DNA wraps around one UvrB monomer. DNA wrap is dependent on ATP binding by UvrB and probably causes local melting of the DNA helix, facilitating insertion of UvrB beta-hairpin between the DNA strands. Then UvrB probes one DNA strand for the presence of a lesion. If a lesion is found the UvrA subunits dissociate and the UvrB-DNA preincision complex is formed. This complex is subsequently bound by UvrC and the second UvrB is released. If no lesion is found, the DNA wraps around the other UvrB subunit that will check the other stand for damage. The chain is UvrABC system protein B from Streptococcus pneumoniae (strain Taiwan19F-14).